The following is a 375-amino-acid chain: Type II restriction enzyme ApaLI (375 aa).

The catalysed reaction is Endonucleolytic cleavage of DNA to give specific double-stranded fragments with terminal 5'-phosphates.. In terms of biological role, a subtype P restriction enzyme that recognizes the double-stranded sequence 5'-GTGCAC-3' and cleaves after G-1. The chain is Type II restriction enzyme ApaLI from Acetobacter pasteurianus (Acetobacter turbidans).